The sequence spans 219 residues: Ribose-5-phosphate isomerase A (219 aa).

Substrate-binding positions include 28-31, 81-84, and 94-97; these read TGST, DGAD, and KGGG. Glu103 acts as the Proton acceptor in catalysis. Lys121 contributes to the substrate binding site.

It belongs to the ribose 5-phosphate isomerase family. As to quaternary structure, homodimer.

It carries out the reaction aldehydo-D-ribose 5-phosphate = D-ribulose 5-phosphate. It participates in carbohydrate degradation; pentose phosphate pathway; D-ribose 5-phosphate from D-ribulose 5-phosphate (non-oxidative stage): step 1/1. Functionally, catalyzes the reversible conversion of ribose-5-phosphate to ribulose 5-phosphate. This Photorhabdus laumondii subsp. laumondii (strain DSM 15139 / CIP 105565 / TT01) (Photorhabdus luminescens subsp. laumondii) protein is Ribose-5-phosphate isomerase A.